The chain runs to 981 residues: Colossin-C (981 aa).

The signal sequence occupies residues 1-23; sequence MKILYSLLLISSIILNTVLNISS. Asn-63 is a glycosylation site (N-linked (GlcNAc...) asparagine). Positions 172–195 are disordered; the sequence is EQTQPPTQPPTQPPTQPPTPPPFT. The segment covering 177–194 has biased composition (pro residues); it reads PTQPPTQPPTQPPTPPPF. 3 N-linked (GlcNAc...) asparagine glycosylation sites follow: Asn-222, Asn-591, and Asn-811.

The protein belongs to the serine-aspartate repeat-containing protein (SDr) family.

It is found in the secreted. The chain is Colossin-C (colC) from Dictyostelium discoideum (Social amoeba).